Consider the following 204-residue polypeptide: uncharacterized protein (204 aa).

Residues 1–10 (MQQAITQQEK) are compositionally biased toward polar residues. Disordered regions lie at residues 1 to 20 (MQQA…LPNR) and 70 to 99 (DEAR…KNTE). One can recognise an SPOR domain in the interval 131 to 204 (VRDSKKFGLQ…TVTDCVVIGM (74 aa)).

To E.coli FtsN repeat regions.

This is an uncharacterized protein from Haemophilus influenzae (strain ATCC 51907 / DSM 11121 / KW20 / Rd).